The primary structure comprises 144 residues: Hemoglobin embryonic subunit alpha (144 aa).

Residues 3–144 (SLSAKDKDVV…LALALAEKYR (142 aa)) form the Globin domain. H61 is a binding site for O2. H90 is a binding site for heme b.

Belongs to the globin family. In terms of assembly, heterotetramer of two alpha chains and two beta chains. Red blood cells.

Its function is as follows. Involved in oxygen transport from gills to the various peripheral tissues. This Oryzias latipes (Japanese rice fish) protein is Hemoglobin embryonic subunit alpha.